Reading from the N-terminus, the 338-residue chain is D-erythrose-4-phosphate dehydrogenase (338 aa).

11 to 12 (RI) contributes to the NAD(+) binding site. Residues 153–155 (SCT), R199, 212–213 (TK), and R235 contribute to the substrate site. The active-site Nucleophile is the C154. N317 contributes to the NAD(+) binding site.

Belongs to the glyceraldehyde-3-phosphate dehydrogenase family. Epd subfamily. Homotetramer.

The protein resides in the cytoplasm. The enzyme catalyses D-erythrose 4-phosphate + NAD(+) + H2O = 4-phospho-D-erythronate + NADH + 2 H(+). The protein operates within cofactor biosynthesis; pyridoxine 5'-phosphate biosynthesis; pyridoxine 5'-phosphate from D-erythrose 4-phosphate: step 1/5. Functionally, catalyzes the NAD-dependent conversion of D-erythrose 4-phosphate to 4-phosphoerythronate. The sequence is that of D-erythrose-4-phosphate dehydrogenase from Shewanella baltica (strain OS223).